The following is an 81-amino-acid chain: uncharacterized protein (81 aa).

Residues 1–45 enclose the SpoVT-AbrB domain; it reads MRTTIDVAGRLVIPKRIRERLGLRGNDQVEITERDGRIEIEPAPT.

This sequence to B.subtilis SpoVT.

This is an uncharacterized protein from Mycobacterium bovis (strain ATCC BAA-935 / AF2122/97).